The primary structure comprises 112 residues: Large ribosomal subunit protein eL30 (112 aa).

The protein belongs to the eukaryotic ribosomal protein eL30 family.

The protein is Large ribosomal subunit protein eL30 (rpl30) of Dictyostelium discoideum (Social amoeba).